A 320-amino-acid chain; its full sequence is UDP-N-acetylenolpyruvoylglucosamine reductase (320 aa).

Residues 34-200 (RAGGLAEVFF…TSAVFEGFAE (167 aa)) enclose the FAD-binding PCMH-type domain. The active site involves R180. The active-site Proton donor is the S229. E299 is a catalytic residue.

This sequence belongs to the MurB family. FAD is required as a cofactor.

The protein resides in the cytoplasm. It carries out the reaction UDP-N-acetyl-alpha-D-muramate + NADP(+) = UDP-N-acetyl-3-O-(1-carboxyvinyl)-alpha-D-glucosamine + NADPH + H(+). Its pathway is cell wall biogenesis; peptidoglycan biosynthesis. Its function is as follows. Cell wall formation. The protein is UDP-N-acetylenolpyruvoylglucosamine reductase of Mesorhizobium japonicum (strain LMG 29417 / CECT 9101 / MAFF 303099) (Mesorhizobium loti (strain MAFF 303099)).